The sequence spans 42 residues: Photosystem I reaction center subunit IX (42 aa).

Residues 7–27 (YLSVAPVLSTLWFVALAGLLI) form a helical membrane-spanning segment.

It belongs to the PsaJ family.

The protein localises to the plastid. Its subcellular location is the chloroplast thylakoid membrane. Its function is as follows. May help in the organization of the PsaE and PsaF subunits. The sequence is that of Photosystem I reaction center subunit IX from Atropa belladonna (Belladonna).